Consider the following 713-residue polypeptide: Meiotic activator RIM4 (713 aa).

Positions 1-90 (MKTEISTADS…TSTSTESRGR (90 aa)) are disordered. The span at 21–31 (ADSELVIREDI) shows a compositional bias: basic and acidic residues. The segment covering 50–71 (GEDSDTDSDNFLQDPEDDVDEE) has biased composition (acidic residues). Over residues 74 to 90 (GRGTVTTTSTSTESRGR) the composition is skewed to low complexity. The 80-residue stretch at 93 to 172 (SCIFVASLAA…RRLRCEPAKV (80 aa)) folds into the RRM 1 domain. The interval 276–337 (HQNNGIINND…SDGIYDDEDK (62 aa)) is disordered. Positions 278–298 (NNGIINNDGSNNNDNNNSNNN) are enriched in low complexity. A compositionally biased stretch (basic and acidic residues) spans 299–327 (NREDSRRNGDVIEEECGHVHGSDSEEKLT). Residues 346–420 (RSIFVGQLDK…KTMHVQYKEV (75 aa)) form the RRM 2 domain. The tract at residues 524-609 (KSMPNSWSSP…KRYARRSSYG (86 aa)) is disordered. Ser525 carries the phosphoserine modification. A compositionally biased stretch (low complexity) spans 526–546 (MPNSWSSPSSKSVNSENESVN). Polar residues predominate over residues 563 to 574 (GRYNAANSFTTY). The segment covering 575–594 (NNSSAGNSNNNNNNNNSNSN) has biased composition (low complexity).

Post-translationally, polyubiquitinated by RSP5.

Its function is as follows. Positive regulator of sporulation-specific genes and of sporulation. Required for premeiotic DNA synthesis and meiotic chromosomal segregation. May act in a nutritional signaling pathway. In Saccharomyces cerevisiae (strain ATCC 204508 / S288c) (Baker's yeast), this protein is Meiotic activator RIM4 (RIM4).